Reading from the N-terminus, the 330-residue chain is tRNA U34 carboxymethyltransferase (330 aa).

Residues Lys91, Trp105, Lys110, Gly130, 152–154 (DPS), 181–182 (IE), Met196, Tyr200, and Arg315 each bind carboxy-S-adenosyl-L-methionine.

The protein belongs to the class I-like SAM-binding methyltransferase superfamily. CmoB family. As to quaternary structure, homotetramer.

The enzyme catalyses carboxy-S-adenosyl-L-methionine + 5-hydroxyuridine(34) in tRNA = 5-carboxymethoxyuridine(34) in tRNA + S-adenosyl-L-homocysteine + H(+). Catalyzes carboxymethyl transfer from carboxy-S-adenosyl-L-methionine (Cx-SAM) to 5-hydroxyuridine (ho5U) to form 5-carboxymethoxyuridine (cmo5U) at position 34 in tRNAs. This chain is tRNA U34 carboxymethyltransferase, found in Shewanella denitrificans (strain OS217 / ATCC BAA-1090 / DSM 15013).